A 172-amino-acid chain; its full sequence is NADH dehydrogenase [ubiquinone] 1 alpha subcomplex subunit 8 (172 aa).

2 CHCH domains span residues Gly-33–Ile-74 and Lys-75–Val-118. 4 consecutive short sequence motifs (cx9C motif) follow at residues Cys-36–Cys-46, Cys-56–Cys-66, Cys-78–Cys-88, and Cys-100–Cys-110. 4 disulfides stabilise this stretch: Cys-36-Cys-66, Cys-46-Cys-56, Cys-78-Cys-110, and Cys-88-Cys-100. The disordered stretch occupies residues Thr-133–Gly-164.

Belongs to the complex I NDUFA8 subunit family. In terms of assembly, complex I is composed of 45 different subunits. In terms of processing, may contain intrachain disulfide bonds, as evidenced by its electrophoretic mobility under reducing vs non-reducing conditions.

Its subcellular location is the mitochondrion inner membrane. The protein localises to the mitochondrion intermembrane space. It localises to the mitochondrion. Functionally, accessory subunit of the mitochondrial membrane respiratory chain NADH dehydrogenase (Complex I), that is believed not to be involved in catalysis. Complex I functions in the transfer of electrons from NADH to the respiratory chain. The immediate electron acceptor for the enzyme is believed to be ubiquinone. The sequence is that of NADH dehydrogenase [ubiquinone] 1 alpha subcomplex subunit 8 (NDUFA8) from Homo sapiens (Human).